The following is a 187-amino-acid chain: Flavin-dependent monooxygenase, reductase subunit HsaB (187 aa).

FAD-binding positions include 32-36, 38-39, 53-55, 59-60, and 85-86; these read PVGFA, QS, CPT, RS, and RF. 152–155 is a binding site for NAD(+); it reads FYRG.

The protein belongs to the non-flavoprotein flavin reductase family. HsaAB monooxygenase consists of an oxygenase component HsaA and a reductase component HsaB.

It catalyses the reaction a reduced flavin + NAD(+) = an oxidized flavin + NADH + 2 H(+). Its pathway is lipid metabolism; steroid biosynthesis. Catalyzes the reduction of free flavins (FMN or FAD) by NADH. Subsequently, the reduced flavins diffuse to the HsaA oxygenase subunit. In Mycobacterium tuberculosis (strain CDC 1551 / Oshkosh), this protein is Flavin-dependent monooxygenase, reductase subunit HsaB (hsaB).